A 224-amino-acid polypeptide reads, in one-letter code: LexA repressor (224 aa).

Residues 31-51 (RAEIAAEFGFKSANAAEEHLQ) constitute a DNA-binding region (H-T-H motif). Catalysis depends on for autocatalytic cleavage activity residues S142 and K179.

Belongs to the peptidase S24 family. Homodimer.

The enzyme catalyses Hydrolysis of Ala-|-Gly bond in repressor LexA.. In terms of biological role, represses a number of genes involved in the response to DNA damage (SOS response), including recA and lexA. In the presence of single-stranded DNA, RecA interacts with LexA causing an autocatalytic cleavage which disrupts the DNA-binding part of LexA, leading to derepression of the SOS regulon and eventually DNA repair. This chain is LexA repressor, found in Paracidovorax citrulli (strain AAC00-1) (Acidovorax citrulli).